The primary structure comprises 162 residues: Large ribosomal subunit protein uL30 (162 aa).

It belongs to the universal ribosomal protein uL30 family. In terms of assembly, part of the 50S ribosomal subunit.

The sequence is that of Large ribosomal subunit protein uL30 from Staphylothermus marinus (strain ATCC 43588 / DSM 3639 / JCM 9404 / F1).